We begin with the raw amino-acid sequence, 143 residues long: UPF0179 protein PTO0851 (143 aa).

The protein belongs to the UPF0179 family.

The chain is UPF0179 protein PTO0851 from Picrophilus torridus (strain ATCC 700027 / DSM 9790 / JCM 10055 / NBRC 100828 / KAW 2/3).